The chain runs to 211 residues: uncharacterized protein (211 aa).

Disordered regions lie at residues Arg-45–Ser-74 and Ala-147–Pro-211. Over residues Gly-48–Gly-71 the composition is skewed to low complexity. Positions Asp-195–Glu-205 are enriched in polar residues.

This is an uncharacterized protein from Homo sapiens (Human).